Reading from the N-terminus, the 379-residue chain is MEKLILRRVDRQNEEMILNFGPQHPSTHGVINFLVETDGEVLKRATPDVGYLHRSIEKIGELVGYPGFMPYTDRVDYVAAMFANEGYAIAVERLLKIEVPQRAQWLRAISCELCRIASHLVSVGTMVMDIGAFTPMLHGIRERETINDLLEALCGARLTYNYHRIGGVAFDLPEGWRDKVLHFLDHFDKFLAEFDRLISFNEIYVKRLANVAVIPGPMAINYGLVGPNLRGSGVDWDVRRDLPYGAYPNFKFDVPVGKGFFGTAGDSFDRYYVRCLEMAESSKIVRQALDSLPEGEITAKVPRNIKPEAGEALGRVESARGELAYYVISDGTNKAYRVRARTGSFTAMCIIEDISRGLMVADLVALISSLDVVAPEIDR.

The protein belongs to the complex I 49 kDa subunit family. In terms of assembly, NDH-1 is composed of 14 different subunits. Subunits NuoB, C, D, E, F, and G constitute the peripheral sector of the complex.

It is found in the cell inner membrane. The enzyme catalyses a quinone + NADH + 5 H(+)(in) = a quinol + NAD(+) + 4 H(+)(out). Functionally, NDH-1 shuttles electrons from NADH, via FMN and iron-sulfur (Fe-S) centers, to quinones in the respiratory chain. The immediate electron acceptor for the enzyme in this species is believed to be ubiquinone. Couples the redox reaction to proton translocation (for every two electrons transferred, four hydrogen ions are translocated across the cytoplasmic membrane), and thus conserves the redox energy in a proton gradient. The chain is NADH-quinone oxidoreductase subunit D 2 from Anaeromyxobacter dehalogenans (strain 2CP-C).